We begin with the raw amino-acid sequence, 1401 residues long: MNQEIMNLFNPTTPAQVFDQIRISIASPEKILSWSYGEIKKPETINYRTFKPERDGLFCARIFGPIKDYECLCGKYKRMKYKGIICEKCSVEVTLSRVRRERMGHIELAAPVAHIWFLKSLPSRIGLLLDMTLKDLERILYFEYYVVLEPGLTALKDRQLLSEEEYLRAQDEYGQDSFTAMIGAEAIRELLKGLELEKLEASLRVEMQETESDIKHKKLAKRLKIVEAFRFSGNKPEWMILTVVPVIPPDLRPLVPLDGGRFATSDLNDLYRRVINRNNRLKRLMELRAPDIIIRNEKRMLQEAVDALFDNGRRGRVITGANKRPLKSLADMLKGKQGRFRQNLLGKRVDYSGRSVITVGPELRLHQCGLPKKMALELFKPFIYSRLDAKGLSTTVKQAKKLVEKERPEVWDILDEVIREHPILLNRAPTLHRLGIQAFEPVLIEGKAIQLHPLVCAAFNADFDGDQMAVHVPLSLEAQLEARVLMMSTNNILHPANGLPIIVPSQDIVLGLYYLSILREGLPGEGKLFGEAAEIEHALHAKVIHLHTKIKYRWEGLDENGKQVSRWYETTAGRTMLGQVLPKSVKMPFDVINKLMTKKEISGVIDQVYRHCGQKETVMFCDRIMALGFYNAFKAGISFGKDDMVVPASKWKTVEDTRTLAKEFEQQYNDGLITHGEKYNKVVDAWSKCTKKISEDMMTEISAVKKNPKGGEAQINSIFMMSNSGARGSQDQMRQLAGMRGLMAKPSGEIIETPIISNFKEGLSVLEYFNSTHGARKGLADTALKTANSGYLTRRLVDVAQDCIITADDCGTKLGIKMRAIIDAGTVVASLASRILGRTAGEDLRDPLTNKVVVKRGTLMEESHVDALQQAGIQEVKIRSALTCELVNGICGKCYGRDLARGTPVNHGEAVGVIAAQSIGEPGTQLTMRTFHIGGAAQINEQSFIESNFDGKVTIKNKAIAKNGEGHLVAMVRNMVVAVTDADGTERATHRIQYGARMRVDEGDMVKRGQRIAEWDPYTRPVLTEVEGIIGFEDLVEGQSISETLDESTGIAKRVVIDWRSQRGGADLRPAIVIKGKDGKILKLARGGEARYMLSVDAILSVDVGAKVKTGDILARISTESAKTRDITGGLPRVAELFEARKPKDAAIIAEISGTIRFGRDYKNKRRISIEPVDTTEETREYLIPKGKHIHLQDGDIVEKGDFIVEGNPAPHDILAIKGIEELAAYLVNEIQEVYRLQGVLINDKHIEVIVRQMLQKVEVTDQGETDMISGEQIDKIEFDQINAKAKEEGKKIATGTPVLLGITKASLQTRSFFSAASFQETTRVLTEAAVNGKVDPLEGLKENVIVGRLIPAGTGASMAKIREVAVKRDKLILDEREKQATIVPSAPEPEPLALPTPEQS.

Residues Cys-71, Cys-73, Cys-86, and Cys-89 each coordinate Zn(2+). 3 residues coordinate Mg(2+): Asp-462, Asp-464, and Asp-466. Residues Cys-810, Cys-884, Cys-891, and Cys-894 each coordinate Zn(2+). The interval 1378 to 1401 (EKQATIVPSAPEPEPLALPTPEQS) is disordered.

The protein belongs to the RNA polymerase beta' chain family. In terms of assembly, the RNAP catalytic core consists of 2 alpha, 1 beta, 1 beta' and 1 omega subunit. When a sigma factor is associated with the core the holoenzyme is formed, which can initiate transcription. Requires Mg(2+) as cofactor. Zn(2+) serves as cofactor.

The catalysed reaction is RNA(n) + a ribonucleoside 5'-triphosphate = RNA(n+1) + diphosphate. DNA-dependent RNA polymerase catalyzes the transcription of DNA into RNA using the four ribonucleoside triphosphates as substrates. The protein is DNA-directed RNA polymerase subunit beta' of Rhodopseudomonas palustris (strain BisB18).